Consider the following 1678-residue polypeptide: Hispidin synthase (1678 aa).

Positions 33–453 (GEHRWSYREL…WLGRNTDFIQ (421 aa)) are adenylation (A) domain. The Carrier 1 domain occupies 586–661 (DELSNTVKHI…SLSNAVYAKL (76 aa)). S620 is modified (O-(pantetheine 4'-phosphoryl)serine). The Ketosynthase family 3 (KS3) domain maps to 683 to 1108 (GKEIVVVGQA…GTLGGIVLEA (426 aa)). Residues C852, H988, and H1029 each act as for beta-ketoacyl synthase activity in the active site. Residues 1201 to 1499 (YKRGALAFAF…VAWSLLLSNG (299 aa)) form a malonyl-CoA:ACP transacylase (MAT) domain region. The disordered stretch occupies residues 1562 to 1582 (EETLSSGSSTPTLENTDLDSG). The span at 1564–1576 (TLSSGSSTPTLEN) shows a compositional bias: polar residues. The Carrier 2 domain maps to 1597–1672 (DDLRDSIVSS…EMVSNLVEQA (76 aa)). Residue S1632 is modified to O-(pantetheine 4'-phosphoryl)serine.

This sequence in the N-terminal section; belongs to the NRP synthetase family.

It carries out the reaction (E)-caffeate + 2 malonyl-CoA + ATP + H(+) = hispidin + AMP + 2 CO2 + diphosphate + 2 CoA. The protein operates within secondary metabolite biosynthesis. PKS-NRPS hybrid synthetase; part of the gene cluster that mediates the fungal bioluminescence cycle. Performs the biosynthesis of hispidin from caffeic acid by two cycles of addition of malonyl units followed by lactonization. The fungal bioluminescence cycle begins with the hispidin synthetase that catalyzes the formation of hispidin which is further hydroxylated by the hispidin-3-hydroxylase, yielding the fungal luciferin 3-hydroxyhispidin. The luciferase then produces an endoperoxide as a high-energy intermediate with decomposition that yields oxyluciferin (also known as caffeoylpyruvate) and light emission. Oxyluciferin can be recycled to caffeic acid by caffeoylpyruvate hydrolase. The sequence is that of Hispidin synthase from Neonothopanus nambi (Agaricus nambi).